Reading from the N-terminus, the 171-residue chain is S-ribosylhomocysteine lyase (171 aa).

The Fe cation site is built by histidine 54, histidine 58, and cysteine 128.

It belongs to the LuxS family. As to quaternary structure, homodimer. It depends on Fe cation as a cofactor.

It carries out the reaction S-(5-deoxy-D-ribos-5-yl)-L-homocysteine = (S)-4,5-dihydroxypentane-2,3-dione + L-homocysteine. Involved in the synthesis of autoinducer 2 (AI-2) which is secreted by bacteria and is used to communicate both the cell density and the metabolic potential of the environment. The regulation of gene expression in response to changes in cell density is called quorum sensing. Catalyzes the transformation of S-ribosylhomocysteine (RHC) to homocysteine (HC) and 4,5-dihydroxy-2,3-pentadione (DPD). This chain is S-ribosylhomocysteine lyase, found in Photorhabdus laumondii subsp. laumondii (strain DSM 15139 / CIP 105565 / TT01) (Photorhabdus luminescens subsp. laumondii).